Reading from the N-terminus, the 191-residue chain is Methylated-DNA--protein-cysteine methyltransferase (191 aa).

Residues Y120 and R134 each contribute to the DNA site. C151 (nucleophile; methyl group acceptor) is an active-site residue.

Belongs to the MGMT family.

Its subcellular location is the nucleus. It catalyses the reaction a 6-O-methyl-2'-deoxyguanosine in DNA + L-cysteinyl-[protein] = S-methyl-L-cysteinyl-[protein] + a 2'-deoxyguanosine in DNA. It carries out the reaction a 4-O-methyl-thymidine in DNA + L-cysteinyl-[protein] = a thymidine in DNA + S-methyl-L-cysteinyl-[protein]. Functionally, involved in the cellular defense against the biological effects of O6-methylguanine (O6-MeG) and O4-methylthymine (O4-MeT) in DNA. Repairs the methylated nucleobase in DNA by stoichiometrically transferring the methyl group to a cysteine residue in the enzyme. This is a suicide reaction: the enzyme is irreversibly inactivated. In Debaryomyces hansenii (strain ATCC 36239 / CBS 767 / BCRC 21394 / JCM 1990 / NBRC 0083 / IGC 2968) (Yeast), this protein is Methylated-DNA--protein-cysteine methyltransferase (MGT1).